A 258-amino-acid chain; its full sequence is Diacetyl reductase [(S)-acetoin forming] (258 aa).

8-32 (LVTGGAQGIGFKIAERLVEDGFKVA) serves as a coordination point for NAD(+). Residue S141 coordinates substrate. Catalysis depends on Y154, which acts as the Proton acceptor. Residue K158 is part of the active site.

It belongs to the short-chain dehydrogenases/reductases (SDR) family.

It carries out the reaction (S)-acetoin + NAD(+) = diacetyl + NADH + H(+). Catalyzes the irreversible reduction of 2,3-butanediol to (S)-acetoin in the presence of NADH. The polypeptide is Diacetyl reductase [(S)-acetoin forming] (butA) (Staphylococcus aureus (strain Mu50 / ATCC 700699)).